Reading from the N-terminus, the 779-residue chain is Endonuclease MutS2 (779 aa).

Residue 328–335 (GPNTGGKT) participates in ATP binding. Residues 704-779 (LDLRGKRYEE…GSGATIVTLG (76 aa)) enclose the Smr domain.

This sequence belongs to the DNA mismatch repair MutS family. MutS2 subfamily. As to quaternary structure, homodimer. Binds to stalled ribosomes, contacting rRNA.

Its function is as follows. Endonuclease that is involved in the suppression of homologous recombination and thus may have a key role in the control of bacterial genetic diversity. In terms of biological role, acts as a ribosome collision sensor, splitting the ribosome into its 2 subunits. Detects stalled/collided 70S ribosomes which it binds and splits by an ATP-hydrolysis driven conformational change. Acts upstream of the ribosome quality control system (RQC), a ribosome-associated complex that mediates the extraction of incompletely synthesized nascent chains from stalled ribosomes and their subsequent degradation. Probably generates substrates for RQC. The chain is Endonuclease MutS2 from Streptococcus agalactiae serotype Ia (strain ATCC 27591 / A909 / CDC SS700).